The following is a 425-amino-acid chain: Kynurenine/alpha-aminoadipate aminotransferase, mitochondrial (425 aa).

The transit peptide at 1–29 (MNYARFITATSAARKPSTIRVMTEILSKA) directs the protein to the mitochondrion. A substrate-binding site is contributed by Arg-20. Residue Lys-69 is modified to N6-acetyllysine. Substrate contacts are provided by Tyr-74 and Tyr-142. Residues 178 to 208 (WKPEDSKNPKKNSPKFLYTVPNGNNPSGNSL) form a disordered region. Lys-179 bears the N6-acetyllysine mark. Residues 198–208 (PNGNNPSGNSL) show a composition bias toward polar residues. Asn-202 is a binding site for substrate. Lys-263 carries the N6-(pyridoxal phosphate)lysine; alternate modification. 2 positions are modified to N6-acetyllysine; alternate: Lys-263 and Lys-339. 2 positions are modified to N6-succinyllysine; alternate: Lys-263 and Lys-339. Arg-399 provides a ligand contact to substrate. Residue Lys-422 is modified to N6-acetyllysine.

The protein belongs to the class-I pyridoxal-phosphate-dependent aminotransferase family. As to quaternary structure, homodimer. It depends on pyridoxal 5'-phosphate as a cofactor.

The protein localises to the mitochondrion. The catalysed reaction is L-kynurenine + 2-oxoglutarate = kynurenate + L-glutamate + H2O. The enzyme catalyses L-2-aminoadipate + 2-oxoglutarate = 2-oxoadipate + L-glutamate. It carries out the reaction glycine + 2-oxoglutarate = glyoxylate + L-glutamate. It catalyses the reaction L-kynurenine + glyoxylate = kynurenate + glycine + H2O. The catalysed reaction is 3-hydroxy-L-kynurenine + glyoxylate = xanthurenate + glycine + H2O. The enzyme catalyses 2-oxohexanoate + L-kynurenine = L-2-aminohexanoate + kynurenate + H2O. It carries out the reaction 3-phenylpyruvate + L-kynurenine = kynurenate + L-phenylalanine + H2O. It catalyses the reaction 4-methylsulfanyl-2-oxobutanoate + L-kynurenine = kynurenate + L-methionine + H2O. The catalysed reaction is 2-oxo-3-sulfanylpropanoate + L-kynurenine = kynurenate + L-cysteine + H2O. The enzyme catalyses indole-3-pyruvate + L-kynurenine = kynurenate + L-tryptophan + H2O. It carries out the reaction 2-oxopentanoate + L-kynurenine = L-2-aminopentanoate + kynurenate + H2O. It catalyses the reaction 4-methyl-2-oxopentanoate + L-kynurenine = kynurenate + L-leucine + H2O. The catalysed reaction is glyoxylate + L-methionine = 4-methylsulfanyl-2-oxobutanoate + glycine. The enzyme catalyses L-2-aminoadipate + glyoxylate = 2-oxoadipate + glycine. It carries out the reaction L-tyrosine + glyoxylate = 3-(4-hydroxyphenyl)pyruvate + glycine. It catalyses the reaction glyoxylate + L-phenylalanine = 3-phenylpyruvate + glycine. The catalysed reaction is L-tryptophan + glyoxylate = indole-3-pyruvate + glycine. The enzyme catalyses L-leucine + glyoxylate = 4-methyl-2-oxopentanoate + glycine. It carries out the reaction 2-oxobutanoate + L-kynurenine = (2S)-2-aminobutanoate + kynurenate + H2O. It catalyses the reaction 2-oxoadipate + L-kynurenine = L-2-aminoadipate + kynurenate + H2O. Its pathway is amino-acid degradation; L-lysine degradation via saccharopine pathway; glutaryl-CoA from L-lysine: step 4/6. Its function is as follows. Transaminase with broad substrate specificity. Has transaminase activity towards aminoadipate, kynurenine, methionine and glutamate. Shows activity also towards tryptophan, aspartate and hydroxykynurenine. Accepts a variety of oxo-acids as amino-group acceptors, with a preference for 2-oxoglutarate, 2-oxocaproic acid, phenylpyruvate and alpha-oxo-gamma-methiol butyric acid. Can also use glyoxylate as amino-group acceptor (in vitro). The chain is Kynurenine/alpha-aminoadipate aminotransferase, mitochondrial from Bos taurus (Bovine).